Here is a 565-residue protein sequence, read N- to C-terminus: 4-coumarate--CoA ligase-like 2 (565 aa).

6 residues coordinate ATP: serine 221, serine 222, glycine 223, threonine 224, threonine 225, and lysine 229. A (E)-4-coumaroyl-AMP-binding site is contributed by phenylalanine 265. Residue lysine 286 coordinates CoA. The interval 288-359 is SBD1; it reads DMAKLLSAVE…ENYPKVKILQ (72 aa). Positions 337, 359, 360, and 364 each coordinate (E)-4-coumaroyl-AMP. Residues glutamine 359, glycine 360, threonine 364, aspartate 445, and arginine 460 each coordinate ATP. The segment at 360–424 is SBD2; sequence GYGLTESTAI…IRSPTVMKGY (65 aa). (E)-4-coumaroyl-AMP is bound by residues lysine 462 and lysine 466. CoA is bound at residue glycine 469. Residue lysine 551 participates in ATP binding. A Microbody targeting signal motif is present at residues 563 to 565; it reads SKL.

The protein belongs to the ATP-dependent AMP-binding enzyme family. It depends on Mg(2+) as a cofactor.

It is found in the peroxisome. It carries out the reaction (E)-4-coumarate + ATP + CoA = (E)-4-coumaroyl-CoA + AMP + diphosphate. It catalyses the reaction (E)-4-coumarate + ATP + H(+) = (E)-4-coumaroyl-AMP + diphosphate. The catalysed reaction is (E)-4-coumaroyl-AMP + CoA = (E)-4-coumaroyl-CoA + AMP + H(+). Carboxylate--CoA ligase that may use 4-coumarate as substrate. Follows a two-step reaction mechanism, wherein the carboxylate substrate first undergoes adenylation by ATP, followed by a thioesterification in the presence of CoA to yield the final CoA thioester. In Arabidopsis thaliana (Mouse-ear cress), this protein is 4-coumarate--CoA ligase-like 2.